Here is a 911-residue protein sequence, read N- to C-terminus: Bifunctional aspartokinase/homoserine dehydrogenase 1, chloroplastic (911 aa).

Residues Met-1–Asp-82 constitute a chloroplast transit peptide. An aspartokinase region spans residues Ser-83 to Leu-331. The segment at Ser-332–Ile-557 is interface. ACT domains follow at residues Val-407–Asn-482 and Ala-488–Gly-565. A homoserine dehydrogenase region spans residues Ile-558–Ser-911. Ile-563 and Thr-644 together coordinate NAD(+). Residues Ile-563, Thr-644, and Lys-668 each coordinate NADP(+). Positions 563, 644, and 668 each coordinate NADPH. Positions 695, 698, 700, and 702 each coordinate Na(+). NADP(+) contacts are provided by Gly-753 and Glu-756. 2 residues coordinate L-homoserine: Glu-756 and Asp-767. The Proton donor role is filled by Lys-771. Gly-888 serves as a coordination point for NAD(+). NADP(+) is bound at residue Gly-888. An NADPH-binding site is contributed by Gly-888.

It in the N-terminal section; belongs to the aspartokinase family. The protein in the C-terminal section; belongs to the homoserine dehydrogenase family. Homo- or heterodimer. A metal cation serves as cofactor.

The protein localises to the plastid. Its subcellular location is the chloroplast. The catalysed reaction is L-homoserine + NADP(+) = L-aspartate 4-semialdehyde + NADPH + H(+). It catalyses the reaction L-homoserine + NAD(+) = L-aspartate 4-semialdehyde + NADH + H(+). The enzyme catalyses L-aspartate + ATP = 4-phospho-L-aspartate + ADP. Its pathway is amino-acid biosynthesis; L-lysine biosynthesis via DAP pathway; (S)-tetrahydrodipicolinate from L-aspartate: step 1/4. It functions in the pathway amino-acid biosynthesis; L-methionine biosynthesis via de novo pathway; L-homoserine from L-aspartate: step 1/3. It participates in amino-acid biosynthesis; L-methionine biosynthesis via de novo pathway; L-homoserine from L-aspartate: step 3/3. The protein operates within amino-acid biosynthesis; L-threonine biosynthesis; L-threonine from L-aspartate: step 1/5. Its pathway is amino-acid biosynthesis; L-threonine biosynthesis; L-threonine from L-aspartate: step 3/5. Inhibition of aspartate kinase activity by threonine and leucine and 3-fold activation by cysteine, isoleucine, valine, serine and alanine at 2.5 mM. Partial inhibition of homoserine dehydrogenase activity by threonine and cysteine (14% of activity remaining at saturation with either amino acid). No synergy between the effectors for both activation or inhibition. In terms of biological role, bifunctional aspartate kinase and homoserine dehydrogenase that catalyzes the first and the third steps toward the synthesis of lysine, methionine and threonine from aspartate. The sequence is that of Bifunctional aspartokinase/homoserine dehydrogenase 1, chloroplastic from Arabidopsis thaliana (Mouse-ear cress).